Here is a 574-residue protein sequence, read N- to C-terminus: MKDMSNKKIFKKYSRVAGLLTAALIVGNLVTANADSNKQNTANTETTTTNEQPKPESSELTTEKAGQKMDDMLNSNDMIKLAPKEMPLESAEKEEKKSEDNKKSEEDHTEEINDKIYSLNYNELEVLAKNGETIENFVPKEGVKKADKFIVIERKKKNINTTPVDISIIDSVTDRTYPAALQLANKGFTENKPDAVVTKRNPQKIHIDLPGMGDKATVEVNDPTYANVSTAIDNLVNQWHDNYSGGNTLPARTQYTESMVYSKSQIEAALNVNSKILDGTLGIDFKSISKGEKKVMIAAYKQIFYTVSANLPNNPADVFDKSVTLKELQRKGVSNEAPPLFVSNVAYGRTVFVKLETSSKSNDVEAAFSAALKGTDVKTNGKYSDILENSSFTAVVLGGDAAEHNKVVTKDFDVIRNVIKDNATFSRKNPAYPISYTSVFLKNNKIAGVNNRSEYVETTSTEYTSGKINLSHQGAYVAQYEILWDEINYDDKGKEVITKRRWDNNWYSKTSPFSTVIPLGANSRNIRIMARECTGLAWEWWRKVIDERDVKLSKEINVNISGSTLSPYGSITYK.

The N-terminal stretch at 1–36 is a signal peptide; that stretch reads MKDMSNKKIFKKYSRVAGLLTAALIVGNLVTANADS. A compositionally biased stretch (low complexity) spans 37-52; it reads NKQNTANTETTTTNEQ. Disordered regions lie at residues 37–64 and 84–111; these read NKQNTANTETTTTNEQPKPESSELTTEK and KEMPLESAEKEEKKSEDNKKSEEDHTEE. Positions 53–64 are enriched in basic and acidic residues; the sequence is PKPESSELTTEK. A run of 4 beta stranded transmembrane segments spans residues 263–276, 283–292, 361–370, and 378–390; these read KSQIEAALNVNSKI, IDFKSISKGE, SNDVEAAFSA, and KTNGKYSDILENS. The Conserved undecapeptide signature appears at 532–542; the sequence is ECTGLAWEWWR. The short motif at 564 to 565 is the Cholesterol binding element; that stretch reads TL.

It belongs to the cholesterol-dependent cytolysin family. Homooligomeric pore complex of 35 to 50 subunits; when inserted in the host membrane.

It localises to the secreted. It is found in the host cell membrane. A cholesterol-dependent toxin that causes cytolysis by forming pores in cholesterol containing host membranes. After binding to target membranes, the protein undergoes a major conformation change, leading to its insertion in the host membrane and formation of an oligomeric pore complex. Cholesterol is required for binding to host membranes, membrane insertion and pore formation; cholesterol binding is mediated by a Thr-Leu pair in the C-terminus. Can be reversibly inactivated by oxidation. The chain is Streptolysin O (slo) from Streptococcus dysgalactiae subsp. equisimilis (Streptococcus equisimilis).